The primary structure comprises 334 residues: GTPase Obg (334 aa).

The Obg domain occupies 1–159 (MRFVDEVVIK…KEVRLELNLL (159 aa)). An OBG-type G domain is found at 160-331 (ADVALLGLPN…LAKKLNEFLQ (172 aa)). GTP is bound by residues 166 to 173 (GLPNAGKS), 191 to 195 (FTTMY), 212 to 215 (DIPG), 282 to 285 (NKID), and 312 to 314 (SAA). 2 residues coordinate Mg(2+): serine 173 and threonine 193.

The protein belongs to the TRAFAC class OBG-HflX-like GTPase superfamily. OBG GTPase family. In terms of assembly, monomer. It depends on Mg(2+) as a cofactor.

The protein resides in the cytoplasm. Its function is as follows. An essential GTPase which binds GTP, GDP and possibly (p)ppGpp with moderate affinity, with high nucleotide exchange rates and a fairly low GTP hydrolysis rate. Plays a role in control of the cell cycle, stress response, ribosome biogenesis and in those bacteria that undergo differentiation, in morphogenesis control. This chain is GTPase Obg, found in Francisella tularensis subsp. tularensis (strain WY96-3418).